The chain runs to 452 residues: uncharacterized protein (452 aa).

72–79 (GPPGSGKT) lines the ATP pocket.

The protein belongs to the AAA ATPase family. RarA/MGS1/WRNIP1 subfamily.

This is an uncharacterized protein from Mycobacterium tuberculosis (strain ATCC 25618 / H37Rv).